A 654-amino-acid polypeptide reads, in one-letter code: Dystrobrevin beta (654 aa).

M1 carries the post-translational modification N-acetylmethionine. A phosphothreonine mark is found at T11, T69, T179, and T212. The ZZ-type zinc-finger motif lies at 238–294; that stretch reads FHPVECSYCHCESMMGFRYRCQQCHNYQLCQNCFWRGHAGGPHSNQHQMKELSSWKS. C243, C246, C258, C261, C267, C270, H280, and H284 together coordinate Zn(2+). S394 carries the post-translational modification Phosphoserine. The tract at residues 399–448 is syntrophin-binding region; sequence DEEHRLIARYAARLAAEAGNMTRPPTDASFNFDANKQQRQLIAELENKNR. T424 carries the phosphothreonine modification. The stretch at 429–519 forms a coiled coil; sequence NFDANKQQRQ…LEGLMKLLKA (91 aa). The tract at residues 520–562 is disordered; sequence QATGSPHTSPTHGGGRSMPMPVRSTSAGSTPTHGPQDSLSGVG. Composition is skewed to polar residues over residues 521-530 and 542-558; these read ATGSPHTSPT and RSTSAGSTPTHGPQDSL.

The protein belongs to the dystrophin family. Dystrobrevin subfamily. Interacts with dystrophin short form DP71 and syntrophins SNTG1 and SNTG2. Binds DTNBP1. Forms a specific complex composed of DMD, SNTB2 and SNTA1 in neuron; the interaction with SNTB2 and SNTA1 is DMD independent. Interacts with UTRN and dystrophin short form DP71 in the kidney and liver. Interacts with SNTB1, SNTB2 and SNTA1 in kidney and liver. Interacts with KIF5A. Interacts with HMG20A and HMG20B. Interacts with OLFM1. Interacts with PRKAR2B and PRKAR1A. Phosphorylated by PKA. Phosphorylation at Thr-11 alters the interaction with KIF5A. In terms of tissue distribution, expressed in neurons. In the isocortex, expressed most prominently in the somata (including the nuclei) and the dendrites of the pyramidal cells. Expressed in the hippocampus CA1, CA2, and CA3 neurons, namely in the initial segments of dendrites. Expressed in the Purkinje cells, molecular layer interneurons, and granule cells of cerebellum. Expressed in axon fascicles associated with the spinal trigeminal tract and in the internal capsule in the brainstem.

The protein resides in the cytoplasm. Its subcellular location is the postsynaptic density. It localises to the cell projection. It is found in the dendrite. The protein localises to the basal cell membrane. The protein resides in the postsynapse. Its subcellular location is the nucleus. Scaffolding protein that assembles DMD and SNTA1 molecules to the basal membrane of kidney cells and liver sinusoids. May function as a repressor of the SYN1 promoter through the binding of repressor element-1 (RE-1), in turn regulates SYN1 expression and may be involved in cell proliferation regulation during the early phase of neural differentiation. May be required for proper maturation and function of a subset of inhibitory synapses. The chain is Dystrobrevin beta from Rattus norvegicus (Rat).